The following is a 474-amino-acid chain: Bifunctional protein HldE (474 aa).

A ribokinase region spans residues 1 to 318 (MKLSMPRFDQ…RAIQREEGSE (318 aa)). 194–197 (NLSE) provides a ligand contact to ATP. Asp263 is a catalytic residue. The cytidylyltransferase stretch occupies residues 343–474 (FTNGCFDILH…AIVEKIRGQG (132 aa)).

This sequence in the N-terminal section; belongs to the carbohydrate kinase PfkB family. The protein in the C-terminal section; belongs to the cytidylyltransferase family. As to quaternary structure, homodimer.

The catalysed reaction is D-glycero-beta-D-manno-heptose 7-phosphate + ATP = D-glycero-beta-D-manno-heptose 1,7-bisphosphate + ADP + H(+). The enzyme catalyses D-glycero-beta-D-manno-heptose 1-phosphate + ATP + H(+) = ADP-D-glycero-beta-D-manno-heptose + diphosphate. It participates in nucleotide-sugar biosynthesis; ADP-L-glycero-beta-D-manno-heptose biosynthesis; ADP-L-glycero-beta-D-manno-heptose from D-glycero-beta-D-manno-heptose 7-phosphate: step 1/4. The protein operates within nucleotide-sugar biosynthesis; ADP-L-glycero-beta-D-manno-heptose biosynthesis; ADP-L-glycero-beta-D-manno-heptose from D-glycero-beta-D-manno-heptose 7-phosphate: step 3/4. Catalyzes the phosphorylation of D-glycero-D-manno-heptose 7-phosphate at the C-1 position to selectively form D-glycero-beta-D-manno-heptose-1,7-bisphosphate. Functionally, catalyzes the ADP transfer from ATP to D-glycero-beta-D-manno-heptose 1-phosphate, yielding ADP-D-glycero-beta-D-manno-heptose. The sequence is that of Bifunctional protein HldE from Pseudomonas syringae pv. tomato (strain ATCC BAA-871 / DC3000).